The following is a 483-amino-acid chain: Kynureninase 1 (483 aa).

Pyridoxal 5'-phosphate is bound by residues Leu147, Thr148, 175–178 (FPSD), Ser232, Asp261, His264, and Tyr286. Lys287 carries the N6-(pyridoxal phosphate)lysine modification. Trp326 and Asn354 together coordinate pyridoxal 5'-phosphate.

The protein belongs to the kynureninase family. In terms of assembly, homodimer. It depends on pyridoxal 5'-phosphate as a cofactor.

The protein localises to the cytoplasm. The enzyme catalyses L-kynurenine + H2O = anthranilate + L-alanine + H(+). It catalyses the reaction 3-hydroxy-L-kynurenine + H2O = 3-hydroxyanthranilate + L-alanine + H(+). Its pathway is amino-acid degradation; L-kynurenine degradation; L-alanine and anthranilate from L-kynurenine: step 1/1. It participates in cofactor biosynthesis; NAD(+) biosynthesis; quinolinate from L-kynurenine: step 2/3. Functionally, catalyzes the cleavage of L-kynurenine (L-Kyn) and L-3-hydroxykynurenine (L-3OHKyn) into anthranilic acid (AA) and 3-hydroxyanthranilic acid (3-OHAA), respectively. The protein is Kynureninase 1 (bna5-1) of Aspergillus terreus (strain NIH 2624 / FGSC A1156).